Reading from the N-terminus, the 564-residue chain is Threonine--tRNA ligase (564 aa).

Residues 167–464 are catalytic; the sequence is DHRAIGKRLE…LLEKTHGNLP (298 aa). The Zn(2+) site is built by Cys-260, His-311, and His-441.

This sequence belongs to the class-II aminoacyl-tRNA synthetase family. As to quaternary structure, homodimer. It depends on Zn(2+) as a cofactor.

It localises to the cytoplasm. The enzyme catalyses tRNA(Thr) + L-threonine + ATP = L-threonyl-tRNA(Thr) + AMP + diphosphate + H(+). Functionally, catalyzes the attachment of threonine to tRNA(Thr) in a two-step reaction: L-threonine is first activated by ATP to form Thr-AMP and then transferred to the acceptor end of tRNA(Thr). Also edits incorrectly charged L-seryl-tRNA(Thr). The protein is Threonine--tRNA ligase of Mycoplasma pneumoniae (strain ATCC 29342 / M129 / Subtype 1) (Mycoplasmoides pneumoniae).